We begin with the raw amino-acid sequence, 359 residues long: Hyaluronan and proteoglycan link protein 3 (359 aa).

The signal sequence occupies residues 1-17; that stretch reads MSLLFLVLLSPFPCVLG. One can recognise an Ig-like V-type domain in the interval 48–164; sequence KLVVETTEES…ESGLVELELR (117 aa). 5 cysteine pairs are disulfide-bonded: Cys-70–Cys-146, Cys-188–Cys-259, Cys-212–Cys-233, Cys-286–Cys-355, and Cys-311–Cys-332. 2 consecutive Link domains span residues 166–261 and 266–357; these read VVFP…FCFA and GRVY…YCYV.

Belongs to the HAPLN family.

Its subcellular location is the secreted. It is found in the extracellular space. The protein localises to the extracellular matrix. Functionally, may function in hyaluronic acid binding. The sequence is that of Hyaluronan and proteoglycan link protein 3 (Hapln3) from Mus musculus (Mouse).